The chain runs to 272 residues: tRNA uridine(34) hydroxylase (272 aa).

Positions Ser-121–Asn-217 constitute a Rhodanese domain. Cys-177 (cysteine persulfide intermediate) is an active-site residue.

Belongs to the TrhO family.

It carries out the reaction uridine(34) in tRNA + AH2 + O2 = 5-hydroxyuridine(34) in tRNA + A + H2O. Functionally, catalyzes oxygen-dependent 5-hydroxyuridine (ho5U) modification at position 34 in tRNAs. This chain is tRNA uridine(34) hydroxylase, found in Ehrlichia ruminantium (strain Welgevonden).